A 282-amino-acid polypeptide reads, in one-letter code: tRNA N(3)-cytidine methyltransferase METTL6 (282 aa).

Residues W45, Y49, G87, D110, D136, L137, and I157 each contribute to the S-adenosyl-L-methionine site.

It belongs to the methyltransferase superfamily. METL family. In terms of assembly, monomer. Interacts with SARS1/SerRS; interaction is mediated via tRNA(Ser) and is required for N(3)-methylcytidine methylation.

It is found in the cytoplasm. It localises to the nucleus. It catalyses the reaction cytidine(32) in tRNA(Ser) + S-adenosyl-L-methionine = N(3)-methylcytidine(32) in tRNA(Ser) + S-adenosyl-L-homocysteine + H(+). Its function is as follows. S-adenosyl-L-methionine-dependent methyltransferase that mediates N(3)-methylcytidine modification of residue 32 of the tRNA anticodon loop of tRNA(Ser), including tRNA(Ser)(UGA) and tRNA(Ser)(GCU). Interaction with SARS1/SerRS is required for N(3)-methylcytidine methylation. In Mus musculus (Mouse), this protein is tRNA N(3)-cytidine methyltransferase METTL6.